A 473-amino-acid polypeptide reads, in one-letter code: ATP synthase subunit beta (473 aa).

158–165 (GGAGVGKT) is a binding site for ATP.

It belongs to the ATPase alpha/beta chains family. F-type ATPases have 2 components, CF(1) - the catalytic core - and CF(0) - the membrane proton channel. CF(1) has five subunits: alpha(3), beta(3), gamma(1), delta(1), epsilon(1). CF(0) has three main subunits: a(1), b(2) and c(9-12). The alpha and beta chains form an alternating ring which encloses part of the gamma chain. CF(1) is attached to CF(0) by a central stalk formed by the gamma and epsilon chains, while a peripheral stalk is formed by the delta and b chains.

It localises to the cell membrane. It carries out the reaction ATP + H2O + 4 H(+)(in) = ADP + phosphate + 5 H(+)(out). Produces ATP from ADP in the presence of a proton gradient across the membrane. The catalytic sites are hosted primarily by the beta subunits. The sequence is that of ATP synthase subunit beta from Geobacillus thermoleovorans (Bacillus thermoleovorans).